The following is a 689-amino-acid chain: DNA ligase (689 aa).

NAD(+) is bound by residues 40-44 (DAEYD), 89-90 (SL), and glutamate 121. The N6-AMP-lysine intermediate role is filled by lysine 123. Arginine 144, glutamate 179, lysine 295, and lysine 319 together coordinate NAD(+). Zn(2+) is bound by residues cysteine 413, cysteine 416, cysteine 431, and cysteine 437. Positions 610–689 (REQSSLTGKI…AEWLTLVRDI (80 aa)) constitute a BRCT domain.

The protein belongs to the NAD-dependent DNA ligase family. LigA subfamily. Mg(2+) serves as cofactor. Requires Mn(2+) as cofactor.

It catalyses the reaction NAD(+) + (deoxyribonucleotide)n-3'-hydroxyl + 5'-phospho-(deoxyribonucleotide)m = (deoxyribonucleotide)n+m + AMP + beta-nicotinamide D-nucleotide.. In terms of biological role, DNA ligase that catalyzes the formation of phosphodiester linkages between 5'-phosphoryl and 3'-hydroxyl groups in double-stranded DNA using NAD as a coenzyme and as the energy source for the reaction. It is essential for DNA replication and repair of damaged DNA. The protein is DNA ligase of Rickettsia bellii (strain RML369-C).